The following is a 299-amino-acid chain: MTATEKTELAKAEVLIEALPYFQRYAGRTFVVKYGGHAMGDPKAAREFAEDIVLLKAVGINPVVVHGGGPQIGAMLKRLGVESTFVDGLRVTDKATAEVAEMVLSGAINKELVGWIAQAGGKAMGVSGKDGSLVTATKLERTTRDPESQIEQILDLGFVGEPTHVDTTILDTAVSAGMIPVVAPIGAGEDGHTYNINADTMAGAIAAALGAARLFLLTAVKGVLDKQGGLLTDLTPAQIAKLKDDGTISGGMIPKLDTCVHAVEAGCEAAVVLDGRVPHAMLLEFFTARGAGTLIRADD.

Substrate contacts are provided by residues 68 to 69 (GG), Arg90, and Asn195.

It belongs to the acetylglutamate kinase family. ArgB subfamily.

It is found in the cytoplasm. The catalysed reaction is N-acetyl-L-glutamate + ATP = N-acetyl-L-glutamyl 5-phosphate + ADP. It functions in the pathway amino-acid biosynthesis; L-arginine biosynthesis; N(2)-acetyl-L-ornithine from L-glutamate: step 2/4. Its function is as follows. Catalyzes the ATP-dependent phosphorylation of N-acetyl-L-glutamate. The chain is Acetylglutamate kinase from Erythrobacter litoralis (strain HTCC2594).